The primary structure comprises 634 residues: Chaperone protein HtpG (634 aa).

The a; substrate-binding stretch occupies residues 1-343 (MTEAENRVTL…SDSLPLNVSR (343 aa)). The b stretch occupies residues 344-560 (EILQENKQLE…SYGMSRTMER (217 aa)). The c stretch occupies residues 561–634 (IMKSAGQNIP…KLNGLLQSLL (74 aa)).

The protein belongs to the heat shock protein 90 family. In terms of assembly, homodimer.

Its subcellular location is the cytoplasm. Its function is as follows. Molecular chaperone. Has ATPase activity. The protein is Chaperone protein HtpG of Methylococcus capsulatus (strain ATCC 33009 / NCIMB 11132 / Bath).